The primary structure comprises 209 residues: Ribonuclease HII (209 aa).

The 190-residue stretch at 20–209 folds into the RNase H type-2 domain; that stretch reads DSEIGIDEVG…KSFLNKLNLI (190 aa). The a divalent metal cation site is built by Asp-26, Glu-27, and Asp-122.

The protein belongs to the RNase HII family. Requires Mn(2+) as cofactor. Mg(2+) is required as a cofactor.

It is found in the cytoplasm. It carries out the reaction Endonucleolytic cleavage to 5'-phosphomonoester.. Its function is as follows. Endonuclease that specifically degrades the RNA of RNA-DNA hybrids. The polypeptide is Ribonuclease HII (Prochlorococcus marinus subsp. pastoris (strain CCMP1986 / NIES-2087 / MED4)).